The following is a 418-amino-acid chain: Alpha-tubulin N-acetyltransferase 1 (418 aa).

An N-acetyltransferase domain is found at 1 to 186; it reads MEFEFDVHKI…NNFVVFEGFF (186 aa). Residues 120–133 and 156–165 each bind acetyl-CoA; these read FYIH…GFGK and SEKFLSFLRK. Disordered stretches follow at residues 237–292 and 322–353; these read SSLG…MNLS and QIKE…HQND. A compositionally biased stretch (basic and acidic residues) spans 277–287; the sequence is QEDHSQRRRTS. Over residues 329 to 353 the composition is skewed to polar residues; sequence RTDSSAQEGRTQDRPNGSNSQHQND.

This sequence belongs to the acetyltransferase ATAT1 family.

It is found in the cytoplasm. It localises to the membrane. The protein resides in the clathrin-coated pit. Its subcellular location is the cell junction. The protein localises to the focal adhesion. It is found in the cell projection. It localises to the axon. The protein resides in the cytoskeleton. Its subcellular location is the spindle. It carries out the reaction L-lysyl-[alpha-tubulin] + acetyl-CoA = N(6)-acetyl-L-lysyl-[alpha-tubulin] + CoA + H(+). Specifically acetylates 'Lys-40' in alpha-tubulin on the lumenal side of microtubules. Promotes microtubule destabilization and accelerates microtubule dynamics; this activity may be independent of acetylation activity. Acetylates alpha-tubulin with a slow enzymatic rate, due to a catalytic site that is not optimized for acetyl transfer. Enters the microtubule through each end and diffuses quickly throughout the lumen of microtubules. Acetylates only long/old microtubules because of its slow acetylation rate since it does not have time to act on dynamically unstable microtubules before the enzyme is released. May be involved in neuron development. The protein is Alpha-tubulin N-acetyltransferase 1 of Xenopus laevis (African clawed frog).